The following is a 664-amino-acid chain: DNA ligase (664 aa).

NAD(+) contacts are provided by residues 32 to 36 (DKEYD) and 80 to 81 (SL). K122 acts as the N6-AMP-lysine intermediate in catalysis. Residues R144, E178, and K314 each coordinate NAD(+). Positions 407, 410, 423, and 429 each coordinate Zn(2+). The region spanning 587–664 (IDENPFMGKT…NEEEFSNKIK (78 aa)) is the BRCT domain.

It belongs to the NAD-dependent DNA ligase family. LigA subfamily. It depends on Mg(2+) as a cofactor. Mn(2+) is required as a cofactor.

The catalysed reaction is NAD(+) + (deoxyribonucleotide)n-3'-hydroxyl + 5'-phospho-(deoxyribonucleotide)m = (deoxyribonucleotide)n+m + AMP + beta-nicotinamide D-nucleotide.. DNA ligase that catalyzes the formation of phosphodiester linkages between 5'-phosphoryl and 3'-hydroxyl groups in double-stranded DNA using NAD as a coenzyme and as the energy source for the reaction. It is essential for DNA replication and repair of damaged DNA. The sequence is that of DNA ligase from Clostridium botulinum (strain 657 / Type Ba4).